The chain runs to 172 residues: MVDKRESYTKEDLLASGRGELFGAKGPQLPAPNMLMMDRVVKMTETGGNFDKGYVEAELDINPDLWFFGCHFIGDPVMPGCLGLDAMWQLVGFYLGWLGGEGKGRALGVGEVKFTGQVLPTAKKVTYRIHFKRIVNRRLIMGLADGEVLVDGRLIYTASDLKVGLFQDTSAF.

The active site involves H71.

The protein belongs to the thioester dehydratase family. FabA subfamily. In terms of assembly, homodimer.

Its subcellular location is the cytoplasm. The enzyme catalyses a (3R)-hydroxyacyl-[ACP] = a (2E)-enoyl-[ACP] + H2O. It carries out the reaction (3R)-hydroxydecanoyl-[ACP] = (2E)-decenoyl-[ACP] + H2O. It catalyses the reaction (2E)-decenoyl-[ACP] = (3Z)-decenoyl-[ACP]. Its pathway is lipid metabolism; fatty acid biosynthesis. Necessary for the introduction of cis unsaturation into fatty acids. Catalyzes the dehydration of (3R)-3-hydroxydecanoyl-ACP to E-(2)-decenoyl-ACP and then its isomerization to Z-(3)-decenoyl-ACP. Can catalyze the dehydratase reaction for beta-hydroxyacyl-ACPs with saturated chain lengths up to 16:0, being most active on intermediate chain length. This is 3-hydroxydecanoyl-[acyl-carrier-protein] dehydratase from Escherichia coli O139:H28 (strain E24377A / ETEC).